Here is a 505-residue protein sequence, read N- to C-terminus: ATP synthase subunit alpha (505 aa).

Position 169-176 (169-176) interacts with ATP; that stretch reads GDRQTGKT.

The protein belongs to the ATPase alpha/beta chains family. As to quaternary structure, F-type ATPases have 2 components, CF(1) - the catalytic core - and CF(0) - the membrane proton channel. CF(1) has five subunits: alpha(3), beta(3), gamma(1), delta(1), epsilon(1). CF(0) has three main subunits: a(1), b(2) and c(9-12). The alpha and beta chains form an alternating ring which encloses part of the gamma chain. CF(1) is attached to CF(0) by a central stalk formed by the gamma and epsilon chains, while a peripheral stalk is formed by the delta and b chains.

It is found in the cell membrane. The enzyme catalyses ATP + H2O + 4 H(+)(in) = ADP + phosphate + 5 H(+)(out). Produces ATP from ADP in the presence of a proton gradient across the membrane. The alpha chain is a regulatory subunit. In Clostridium acetobutylicum (strain ATCC 824 / DSM 792 / JCM 1419 / IAM 19013 / LMG 5710 / NBRC 13948 / NRRL B-527 / VKM B-1787 / 2291 / W), this protein is ATP synthase subunit alpha.